The chain runs to 534 residues: 26S proteasome non-ATPase regulatory subunit 3 (534 aa).

Basic and acidic residues predominate over residues 1–16 (MKQEGSARRRGADKAK). Residues 1 to 68 (MKQEGSARRR…AAEHSQRELD (68 aa)) are disordered. Pro residues predominate over residues 17–32 (PPPGGGEQEPPPPPAP). Lysine 38 participates in a covalent cross-link: Glycyl lysine isopeptide (Lys-Gly) (interchain with G-Cter in SUMO1); alternate. Lysine 38 is covalently cross-linked (Glycyl lysine isopeptide (Lys-Gly) (interchain with G-Cter in SUMO2); alternate). Positions 49–61 (GETAGKTAAAAAE) are enriched in low complexity. Residues 286 to 465 (ARYLYYTGRI…GYVQSKEMID (180 aa)) enclose the PCI domain. Phosphoserine occurs at positions 418 and 430. A disordered region spans residues 500 to 534 (SYNKDLESAEERREREQQDLEFAKEMAEDDDDSFP). Basic and acidic residues predominate over residues 501–525 (YNKDLESAEERREREQQDLEFAKEM).

Belongs to the proteasome subunit S3 family. As to quaternary structure, component of the 19S proteasome regulatory particle complex. The 26S proteasome consists of a 20S core particle (CP) and two 19S regulatory subunits (RP). The regulatory particle is made of a lid composed of 9 subunits including PSMD3, a base containing 6 ATPases and few additional components. Interacts with UBQLN1 (via ubiquitin-like domain). Interacts with ERCC6.

Functionally, component of the 26S proteasome, a multiprotein complex involved in the ATP-dependent degradation of ubiquitinated proteins. This complex plays a key role in the maintenance of protein homeostasis by removing misfolded or damaged proteins, which could impair cellular functions, and by removing proteins whose functions are no longer required. Therefore, the proteasome participates in numerous cellular processes, including cell cycle progression, apoptosis, or DNA damage repair. This chain is 26S proteasome non-ATPase regulatory subunit 3 (PSMD3), found in Bos taurus (Bovine).